We begin with the raw amino-acid sequence, 312 residues long: uncharacterized protein (312 aa).

2 disordered regions span residues 1 to 26 and 45 to 106; these read MQKD…AMVA and GNLQ…LPSG. The span at 8–17 shows a compositional bias: basic residues; the sequence is RFQRNKKKIN. Positions 68 to 77 are enriched in basic and acidic residues; sequence NGKRNGDKVR. A compositionally biased stretch (polar residues) spans 85–103; sequence GHSSYAGSRISGGNSNSHL.

This is an uncharacterized protein from Schizosaccharomyces pombe (strain 972 / ATCC 24843) (Fission yeast).